A 330-amino-acid polypeptide reads, in one-letter code: Glycerol-3-phosphate dehydrogenase [NAD(P)+] (330 aa).

NADPH contacts are provided by tryptophan 11, arginine 33, and lysine 105. Residues lysine 105, glycine 133, and serine 135 each contribute to the sn-glycerol 3-phosphate site. Residue alanine 137 coordinates NADPH. Positions 188, 241, 251, 252, and 253 each coordinate sn-glycerol 3-phosphate. The active-site Proton acceptor is the lysine 188. Position 252 (arginine 252) interacts with NADPH. The NADPH site is built by valine 276 and glutamate 278.

It belongs to the NAD-dependent glycerol-3-phosphate dehydrogenase family.

Its subcellular location is the cytoplasm. It carries out the reaction sn-glycerol 3-phosphate + NAD(+) = dihydroxyacetone phosphate + NADH + H(+). It catalyses the reaction sn-glycerol 3-phosphate + NADP(+) = dihydroxyacetone phosphate + NADPH + H(+). It functions in the pathway membrane lipid metabolism; glycerophospholipid metabolism. Catalyzes the reduction of the glycolytic intermediate dihydroxyacetone phosphate (DHAP) to sn-glycerol 3-phosphate (G3P), the key precursor for phospholipid synthesis. The protein is Glycerol-3-phosphate dehydrogenase [NAD(P)+] of Acidovorax sp. (strain JS42).